The chain runs to 213 residues: Citrate synthase, mitochondrial (213 aa).

H74 is a catalytic residue. N6-acetyllysine; alternate is present on residues K94 and K100. 2 positions are modified to N6-succinyllysine; alternate: K94 and K100. The active site involves H120. R129 contacts oxaloacetate. K148 bears the N6-acetyllysine; alternate mark. Position 148 is an N6-succinyllysine; alternate (K148). N6-acetyllysine is present on K155. Position 166 is an N6-acetyllysine; alternate (K166). An N6-succinyllysine; alternate modification is found at K166. N6,N6,N6-trimethyllysine is present on K168. The active site involves D175. Position 201 (R201) interacts with oxaloacetate.

Belongs to the citrate synthase family. In terms of assembly, homodimer. Post-translationally, in response to mitochondrial stress, the precursor protein is ubiquitinated by the SIFI complex in the cytoplasm before mitochondrial import, leading to its degradation. Within the SIFI complex, UBR4 initiates ubiquitin chain that are further elongated or branched by KCMF1.

The protein resides in the mitochondrion matrix. It catalyses the reaction oxaloacetate + acetyl-CoA + H2O = citrate + CoA + H(+). It functions in the pathway carbohydrate metabolism; tricarboxylic acid cycle; isocitrate from oxaloacetate: step 1/2. Its function is as follows. Key enzyme of the Krebs tricarboxylic acid cycle which catalyzes the synthesis of citrate from acetyl coenzyme A and oxaloacetate. In Mesocricetus auratus (Golden hamster), this protein is Citrate synthase, mitochondrial.